We begin with the raw amino-acid sequence, 1197 residues long: DExH-box ATP-dependent RNA helicase DExH3 (1197 aa).

One can recognise a Helicase ATP-binding domain in the interval 309 to 476; sequence LKAIAANQVV…FGGAPAMHIP (168 aa). 322–329 contributes to the ATP binding site; sequence GETGCGKT. Residues 423-426 carry the DEIH box motif; it reads DEIH. The 175-residue stretch at 564–738 folds into the Helicase C-terminal domain; sequence LIENVLCHIV…SLCLQIKSLG (175 aa).

It belongs to the DExH box helicase family.

The catalysed reaction is ATP + H2O = ADP + phosphate + H(+). This Arabidopsis thaliana (Mouse-ear cress) protein is DExH-box ATP-dependent RNA helicase DExH3.